Here is a 144-residue protein sequence, read N- to C-terminus: MAFTFAAFCYMLALLLTATLIFFAIWHIIAFDELKTDYKNPIDQCNTLNPLVLPEYLIHAFFCVMFLCAAEWLTLGLNMPLLAYHIWRYMSRPVMSGPGLYDPTTIMNADILAYCQKEGWCKLAFYLLAFFYYLYGMIYVLVSS.

Over 1–10 (MAFTFAAFCY) the chain is Cytoplasmic. A helical transmembrane segment spans residues 11–31 (MLALLLTATLIFFAIWHIIAF). At 32 to 56 (DELKTDYKNPIDQCNTLNPLVLPEY) the chain is on the lumenal side. The helical transmembrane segment at 57-77 (LIHAFFCVMFLCAAEWLTLGL) threads the bilayer. The Cytoplasmic segment spans residues 78–122 (NMPLLAYHIWRYMSRPVMSGPGLYDPTTIMNADILAYCQKEGWCK). A helical membrane pass occupies residues 123–143 (LAFYLLAFFYYLYGMIYVLVS). Residue S144 is a topological domain, lumenal.

This sequence belongs to the cornichon family. As to quaternary structure, interacts with AREG immature precursor and with immature TGFA, i.e. with a prosegment and lacking full N-glycosylation, but not with the fully N-glycosylated form. In the Golgi apparatus, may form a complex with GORASP55 and transmembrane TGFA.

It localises to the endoplasmic reticulum membrane. The protein localises to the golgi apparatus membrane. Involved in the selective transport and maturation of TGF-alpha family proteins. The chain is Protein cornichon homolog 1 (CNIH1) from Pongo abelii (Sumatran orangutan).